The following is a 199-amino-acid chain: Tumor protein p53-inducible nuclear protein 2 (199 aa).

Residues 26–41 (VSEEDEVDGWLIIDLQ) carry the LIR motif. Disordered stretches follow at residues 41-69 (QDSY…LMDE), 117-153 (LESG…LHHA), and 173-199 (LQRA…ARES). Positions 47 to 64 (PPDPRASPAPAGRPPPAP) are enriched in pro residues. The residue at position 136 (Ser136) is a Phosphoserine.

As to quaternary structure, interacts with VMP1, GABARAP, GABARAPL1, GABARAPL2, MAP1LC3A, MAP1LC3B, MAP1LC3C and THRA. In terms of tissue distribution, abundantly expressed in skeletal muscle and heart and expression is highly repressed in muscle from obese diabetic rats.

The protein resides in the cytoplasm. Its subcellular location is the cytosol. It is found in the nucleus. The protein localises to the PML body. It localises to the cytoplasmic vesicle. The protein resides in the autophagosome. Functionally, dual regulator of transcription and autophagy. Positively regulates autophagy and is required for autophagosome formation and processing. May act as a scaffold protein that recruits MAP1LC3A, GABARAP and GABARAPL2 and brings them to the autophagosome membrane by interacting with VMP1 where, in cooperation with the BECN1-PI3-kinase class III complex, they trigger autophagosome development. Acts as a transcriptional activator of THRA. This chain is Tumor protein p53-inducible nuclear protein 2 (Tp53inp2), found in Rattus norvegicus (Rat).